The chain runs to 1063 residues: NAD-specific glutamate dehydrogenase (1063 aa).

It belongs to the Glu/Leu/Phe/Val dehydrogenases family. Highly divergent. Homotetramer.

The catalysed reaction is L-glutamate + NAD(+) + H2O = 2-oxoglutarate + NH4(+) + NADH + H(+). With respect to regulation, allosterically activated by NADP(+). The chain is NAD-specific glutamate dehydrogenase from Achlya klebsiana.